A 113-amino-acid chain; its full sequence is Class I hydrophobin fvh1 (113 aa).

The first 20 residues, 1 to 20, serve as a signal peptide directing secretion; sequence MVSFRAFTVAASLFATLAAA. Intrachain disulfides connect Cys34–Cys94, Cys41–Cys88, Cys42–Cys75, and Cys95–Cys108. A glycan (N-linked (GlcNAc...) asparagine) is linked at Asn35. Asn97 carries N-linked (GlcNAc...) asparagine glycosylation.

The protein belongs to the fungal hydrophobin family. As to quaternary structure, self-assembles to form functional amyloid fibrils called rodlets. Self-assembly into fibrillar rodlets occurs spontaneously at hydrophobic:hydrophilic interfaces and the rodlets further associate laterally to form amphipathic monolayers.

It localises to the secreted. The protein localises to the cell wall. Aerial growth, conidiation, and dispersal of filamentous fungi in the environment rely upon a capability of their secreting small amphipathic proteins called hydrophobins (HPBs) with low sequence identity. Class I can self-assemble into an outermost layer of rodlet bundles on aerial cell surfaces, conferring cellular hydrophobicity that supports fungal growth, development and dispersal; whereas Class II form highly ordered films at water-air interfaces through intermolecular interactions but contribute nothing to the rodlet structure. Fvh1 is a class I hydrophobin involved in fruiting body initiation. In Flammulina velutipes (Agaricus velutipes), this protein is Class I hydrophobin fvh1.